Reading from the N-terminus, the 268-residue chain is uncharacterized protein (268 aa).

The signal sequence occupies residues 1–18 (MRGFLLLSLGVFSFSALA). Domain stretches follow at residues 24 to 184 (SHDL…ELLP) and 185 to 268 (SPAT…NWLR). A disulfide bridge connects residues cysteine 110 and cysteine 115.

In terms of assembly, monomer.

It localises to the periplasm. This is an uncharacterized protein from Pseudomonas aeruginosa (strain ATCC 15692 / DSM 22644 / CIP 104116 / JCM 14847 / LMG 12228 / 1C / PRS 101 / PAO1).